Consider the following 447-residue polypeptide: Trichothecene C-3 esterase (447 aa).

Residues 1–22 form the signal peptide; that stretch reads MALNRLVFSLSLWLGFIGAAQA. N-linked (GlcNAc...) asparagine glycans are attached at residues N59, N66, N136, and N189. Catalysis depends on S202, which acts as the Charge relay system. N-linked (GlcNAc...) asparagine glycans are attached at residues N238, N284, and N314. Residues D352 and H384 each act as charge relay system in the active site. N389 and N423 each carry an N-linked (GlcNAc...) asparagine glycan.

This sequence belongs to the AB hydrolase superfamily. Lipase family.

It participates in sesquiterpene biosynthesis; trichothecene biosynthesis. Functionally, trichothecene C-3 esterase; part of the core gene cluster that mediates the biosynthesis of trichothecenes, a very large family of chemically related bicyclic sesquiterpene compounds acting as mycotoxins, including T2-toxin. The biosynthesis of trichothecenes begins with the cyclization of farnesyl diphosphate to trichodiene and is catalyzed by the trichodiene synthase TRI5. Trichodiene undergoes a series of oxygenations catalyzed by the cytochrome P450 monooxygenase TRI4. TRI4 controls the addition of four oxygens at C-2, C-3, C-11, and the C-12, C-13-epoxide to form the intermediate isotrichotriol. Isotrichotriol then undergoes a non-enzymatic isomerization and cyclization to form isotrichodermol. During this process, the oxygen at the C-2 position becomes the pyran ring oxygen and the hydroxyl group at C-11 is lost. More complex type A trichothecenes are built by modifying isotrichodermol through a series of paired hydroxylation and acetylation or acylation steps. Isotrichodermol is converted to isotrichodermin by the acetyltransferase TRI101. TRI101 encodes a C-3 transacetylase that acts as a self-protection or resistance factor during biosynthesis and that the presence of a free C-3 hydroxyl group is a key component of Fusarium trichothecene phytotoxicity. A second hydroxyl group is added to C-15 by the trichothecene C-15 hydroxylase TRI11, producing 15-decalonectrin, which is then acetylated by TRI3, producing calonectrin. A third hydroxyl group is added at C-4 by the cytochrome P450 monooxygenase TRI13, converting calonectrin to 3,15-diacetoxyspirpenol, which is subsequently acetylated by the acetyltransferase TRI7. A fourth hydroxyl group is added to C-8 by the cytochrome P450 monooxygenase TRI1, followed by the addition of an isovaleryl moiety by TRI16. Finally, the acetyl group is removed from the C-3 position by the trichothecene C-3 esterase TRI8 to produce T-2 toxin. The protein is Trichothecene C-3 esterase of Fusarium sporotrichioides.